The sequence spans 491 residues: UDP-N-acetylmuramate--L-alanine ligase (491 aa).

Position 126–132 (126–132 (GTHGKTT)) interacts with ATP.

It belongs to the MurCDEF family.

Its subcellular location is the cytoplasm. It carries out the reaction UDP-N-acetyl-alpha-D-muramate + L-alanine + ATP = UDP-N-acetyl-alpha-D-muramoyl-L-alanine + ADP + phosphate + H(+). The protein operates within cell wall biogenesis; peptidoglycan biosynthesis. Its function is as follows. Cell wall formation. The protein is UDP-N-acetylmuramate--L-alanine ligase of Enterobacter sp. (strain 638).